An 82-amino-acid chain; its full sequence is Consomatin Ar1 (82 aa).

Positions 1-22 (MQTAYWVVVMMMMVWVTAPVSE) are cleaved as a signal peptide. The propeptide occupies 23-60 (GGKLSDVIWGLVPDDLTPQIILQILNASRHAYRRVRPR). Cysteine 64 and cysteine 69 form a disulfide bridge. Residue tryptophan 66 is modified to D-tryptophan. Proline 70, proline 71, and proline 73 each carry 4-hydroxyproline. A propeptide spanning residues 74 to 82 (QWIHPLVKR) is cleaved from the precursor.

Belongs to the conotoxin C superfamily. Consomatin family. Expressed by the venom duct.

The protein resides in the secreted. Its function is as follows. Moderately activates human somatostatin receptors (SSTR) with a preferential activation of SSTR1 and SSTR4. In vivo, does not cause behavioral changes in mice within a few minutes of intracranial injection, but causes a progressive loss of movement thereafter. Four to five hours after injection, mice recover, even with the highest dose tested. Shows antinociception and antihyperalgesia activities in two mouse models of acute pain, most probably by acting outside the central nervous system. This Conus arenatus (Sand-dusted cone) protein is Consomatin Ar1.